We begin with the raw amino-acid sequence, 666 residues long: Chaperone protein dnaK1 (666 aa).

Threonine 198 is modified (phosphothreonine; by autocatalysis).

This sequence belongs to the heat shock protein 70 family.

Acts as a chaperone. This is Chaperone protein dnaK1 (dnaK1) from Prochlorococcus marinus (strain SARG / CCMP1375 / SS120).